The chain runs to 64 residues: Neurotoxin BmK-II (64 aa).

Positions 2-64 (RDAYIAKPHN…VPIRIPGNCH (63 aa)) constitute an LCN-type CS-alpha/beta domain. Disulfide bonds link cysteine 12–cysteine 63, cysteine 16–cysteine 36, cysteine 22–cysteine 46, and cysteine 26–cysteine 48.

It belongs to the long (4 C-C) scorpion toxin superfamily. Sodium channel inhibitor family. Alpha subfamily. In terms of tissue distribution, expressed by the venom gland.

It is found in the secreted. Its function is as follows. Binds to sodium channels (Nav) and inhibits the inactivation of the activated channels, thereby blocking neuronal transmission. This toxin is active against mammals and insects. BmK-II is 6-fold less toxic than BmK-I. The chain is Neurotoxin BmK-II from Olivierus martensii (Manchurian scorpion).